We begin with the raw amino-acid sequence, 428 residues long: 5'-deoxyadenosine deaminase (428 aa).

The Zn(2+) site is built by H59 and H61. Substrate is bound by residues E88 and H180. Zn(2+) is bound at residue H207. E210 and D296 together coordinate substrate. D296 serves as a coordination point for Zn(2+).

This sequence belongs to the metallo-dependent hydrolases superfamily. MTA/SAH deaminase family. As to quaternary structure, homotetramer. The cofactor is Zn(2+).

It catalyses the reaction 5'-deoxyadenosine + H2O + H(+) = 5'-deoxyinosine + NH4(+). It carries out the reaction S-adenosyl-L-homocysteine + H2O + H(+) = S-inosyl-L-homocysteine + NH4(+). The enzyme catalyses S-methyl-5'-thioadenosine + H2O + H(+) = S-methyl-5'-thioinosine + NH4(+). The catalysed reaction is adenosine + H2O + H(+) = inosine + NH4(+). It functions in the pathway amino-acid biosynthesis; S-adenosyl-L-methionine biosynthesis. Catalyzes the deamination of three SAM-derived enzymatic products, namely 5'-deoxyadenosine, S-adenosyl-L-homocysteine, and 5'-methylthioadenosine, to produce the inosine analogs. Can also deaminate adenosine. The preferred substrate for this enzyme is 5'-deoxyadenosine, but all these substrates are efficiently deaminated. Likely functions in a S-adenosyl-L-methionine (SAM) recycling pathway from S-adenosyl-L-homocysteine (SAH) produced from SAM-dependent methylation reactions. May also be involved in the recycling of 5'-deoxyadenosine, whereupon the 5'-deoxyribose moiety of 5'-deoxyinosine is further metabolized to deoxyhexoses used for the biosynthesis of aromatic amino acids in methanogens. The chain is 5'-deoxyadenosine deaminase from Methanococcus aeolicus (strain ATCC BAA-1280 / DSM 17508 / OCM 812 / Nankai-3).